The primary structure comprises 400 residues: Tryptophan synthase beta chain (400 aa).

Lysine 92 carries the post-translational modification N6-(pyridoxal phosphate)lysine.

Belongs to the TrpB family. As to quaternary structure, tetramer of two alpha and two beta chains. Pyridoxal 5'-phosphate is required as a cofactor.

The catalysed reaction is (1S,2R)-1-C-(indol-3-yl)glycerol 3-phosphate + L-serine = D-glyceraldehyde 3-phosphate + L-tryptophan + H2O. The protein operates within amino-acid biosynthesis; L-tryptophan biosynthesis; L-tryptophan from chorismate: step 5/5. In terms of biological role, the beta subunit is responsible for the synthesis of L-tryptophan from indole and L-serine. The chain is Tryptophan synthase beta chain from Neisseria meningitidis serogroup B (strain ATCC BAA-335 / MC58).